Reading from the N-terminus, the 253-residue chain is Short-chain dehydrogenase/reductase ATR9 (253 aa).

NADP(+)-binding residues include S15, S16, I18, S38, N39, R42, D65, and K129. The Proton donor role is filled by S147. NADP(+) is bound at residue T194.

The protein belongs to the short-chain dehydrogenases/reductases (SDR) family.

It participates in mycotoxin biosynthesis. Short-chain dehydrogenase/reductase; part of the core atranone cluster (CAC) which products are predicted to catalyze most or all steps of mycotoxin atranone synthesis, starting from geranylgeranyl pyrophosphate (GGPP). The initial cyclization of GGPP to dolabellane is probably performed by the terpene cyclase ATR13. The Baeyer-Villiger oxidation near the end of the atranone synthesis, which converts atranones D and E to atranones F and G is predicted to be catalyzed by the monooxygenase ATR8. Of the CAC's other predicted gene products, the reducing PKS ATR6 might synthesize a polyketide chain. This polyketide is probably transferred onto the atranone backbone by the polyketide transferase ATR5. Other predicted CAC products include 4 oxygenases (ATR2, ATR3, ATR4, and ATR14), 3 short-chain reductases (ATR7, ATR9, and ATR10), and a methyltransferase (ATR12). These may all be involved in the various steps of atranone biosynthesis, although their specific roles must await experimental determination. The chain is Short-chain dehydrogenase/reductase ATR9 from Stachybotrys chlorohalonatus (strain IBT 40285).